Reading from the N-terminus, the 47-residue chain is Large ribosomal subunit protein bL32c (47 aa).

The protein belongs to the bacterial ribosomal protein bL32 family.

The protein localises to the plastid. The polypeptide is Large ribosomal subunit protein bL32c (rpl32) (Prototheca wickerhamii).